The primary structure comprises 95 residues: MSVDISTVKRVAHLARIAVSEDDAERMTGELNAILGFVEQLNEVDVEGIEPMTSVTPMKMRMREDKVTDGGIAAAVVANAPVTEDNFFVVPKVVE.

This sequence belongs to the GatC family. In terms of assembly, heterotrimer of A, B and C subunits.

It catalyses the reaction L-glutamyl-tRNA(Gln) + L-glutamine + ATP + H2O = L-glutaminyl-tRNA(Gln) + L-glutamate + ADP + phosphate + H(+). It carries out the reaction L-aspartyl-tRNA(Asn) + L-glutamine + ATP + H2O = L-asparaginyl-tRNA(Asn) + L-glutamate + ADP + phosphate + 2 H(+). In terms of biological role, allows the formation of correctly charged Asn-tRNA(Asn) or Gln-tRNA(Gln) through the transamidation of misacylated Asp-tRNA(Asn) or Glu-tRNA(Gln) in organisms which lack either or both of asparaginyl-tRNA or glutaminyl-tRNA synthetases. The reaction takes place in the presence of glutamine and ATP through an activated phospho-Asp-tRNA(Asn) or phospho-Glu-tRNA(Gln). The sequence is that of Aspartyl/glutamyl-tRNA(Asn/Gln) amidotransferase subunit C from Brucella abortus (strain S19).